A 214-amino-acid polypeptide reads, in one-letter code: Guanylate kinase (214 aa).

Residues 6–192 (GTLYIISAPS…ALEDLKSIFR (187 aa)) enclose the Guanylate kinase-like domain. An ATP-binding site is contributed by 13–20 (APSGAGKT).

This sequence belongs to the guanylate kinase family.

It localises to the cytoplasm. The enzyme catalyses GMP + ATP = GDP + ADP. Essential for recycling GMP and indirectly, cGMP. The sequence is that of Guanylate kinase from Pseudomonas syringae pv. tomato (strain ATCC BAA-871 / DC3000).